We begin with the raw amino-acid sequence, 151 residues long: SsrA-binding protein (151 aa).

This sequence belongs to the SmpB family.

The protein localises to the cytoplasm. In terms of biological role, required for rescue of stalled ribosomes mediated by trans-translation. Binds to transfer-messenger RNA (tmRNA), required for stable association of tmRNA with ribosomes. tmRNA and SmpB together mimic tRNA shape, replacing the anticodon stem-loop with SmpB. tmRNA is encoded by the ssrA gene; the 2 termini fold to resemble tRNA(Ala) and it encodes a 'tag peptide', a short internal open reading frame. During trans-translation Ala-aminoacylated tmRNA acts like a tRNA, entering the A-site of stalled ribosomes, displacing the stalled mRNA. The ribosome then switches to translate the ORF on the tmRNA; the nascent peptide is terminated with the 'tag peptide' encoded by the tmRNA and targeted for degradation. The ribosome is freed to recommence translation, which seems to be the essential function of trans-translation. This is SsrA-binding protein from Chlamydia muridarum (strain MoPn / Nigg).